Here is a 175-residue protein sequence, read N- to C-terminus: MMTYIVFILSTVFVVSFVSFSSKPSPIYGGFGLIVAGGTGCGIVLNFGGSFLGLMVFLIYLGGMLVVFGYTTAMATEPYPEAWTSNKAVLAMFITGVLAELLTACYILKEDEVEVVFKFNGAGDWVIYDTGDSGFFSEEAMGIAALYSYGTWLVVVTGWSLLIGVLVIMEVTRGN.

5 helical membrane passes run 1-21 (MMTY…VSFS), 25-45 (SPIY…GIVL), 47-67 (FGGS…MLVV), 88-108 (AVLA…CYIL), and 149-169 (YGTW…LVIM).

Belongs to the complex I subunit 6 family. In terms of assembly, core subunit of respiratory chain NADH dehydrogenase (Complex I) which is composed of 45 different subunits.

It is found in the mitochondrion inner membrane. It catalyses the reaction a ubiquinone + NADH + 5 H(+)(in) = a ubiquinol + NAD(+) + 4 H(+)(out). Its function is as follows. Core subunit of the mitochondrial membrane respiratory chain NADH dehydrogenase (Complex I) which catalyzes electron transfer from NADH through the respiratory chain, using ubiquinone as an electron acceptor. Essential for the catalytic activity and assembly of complex I. The chain is NADH-ubiquinone oxidoreductase chain 6 (MT-ND6) from Felis catus (Cat).